The primary structure comprises 297 residues: Glutamyl-Q tRNA(Asp) synthetase (297 aa).

L-glutamate contacts are provided by residues 9-13 and E45; that span reads RFAPS. A 'HIGH' region motif is present at residues 12–22; it reads PSPTGPLHFGS. Zn(2+) is bound by residues C101, C103, and C118. 2 residues coordinate L-glutamate: Y170 and R188. A 'KMSKS' region motif is present at residues 226–230; it reads KLSKS. An ATP-binding site is contributed by K229.

This sequence belongs to the class-I aminoacyl-tRNA synthetase family. GluQ subfamily. It depends on Zn(2+) as a cofactor.

Catalyzes the tRNA-independent activation of glutamate in presence of ATP and the subsequent transfer of glutamate onto a tRNA(Asp). Glutamate is transferred on the 2-amino-5-(4,5-dihydroxy-2-cyclopenten-1-yl) moiety of the queuosine in the wobble position of the QUC anticodon. This Xanthomonas campestris pv. campestris (strain 8004) protein is Glutamyl-Q tRNA(Asp) synthetase.